A 125-amino-acid chain; its full sequence is Calcitonin receptor-stimulating peptide 2 (125 aa).

Positions 1–25 are cleaved as a signal peptide; that stretch reads MGFWKFLPFLVLSFLVVYQAGMFQA. Residues 26–77 constitute a propeptide that is removed on maturation; that stretch reads APFRSALENDFDPAILTEKEMCLLLAAVMNDYVQMKTSELKQEAEHFHITAQ. The cysteines at positions 81 and 86 are disulfide-linked.

Belongs to the calcitonin family.

The protein localises to the secreted. The chain is Calcitonin receptor-stimulating peptide 2 (CRSP2) from Capra hircus (Goat).